A 1310-amino-acid chain; its full sequence is Angiotensin-converting enzyme (1310 aa).

A signal peptide spans 1–33 (MGAAPGRRGPRLLRPPPPLLLLLLLLRPPPAAL). The Extracellular portion of the chain corresponds to 34–1260 (TLDPGLLPGD…GMNLDAQQAR (1227 aa)). 2 Peptidase M2 domains span residues 45–628 (AADE…LGWP) and 647–1226 (VTDE…LGWP). N-linked (GlcNAc...) asparagine glycosylation is found at N59, N79, and N151. C162 and C170 are joined by a disulfide. Position 236 (Y236) interacts with chloride. N323 carries an N-linked (GlcNAc...) asparagine glycan. A disulfide bridge links C364 with C382. Residue H395 participates in Zn(2+) binding. E396 functions as the Proton acceptor 1 in the catalytic mechanism. Zn(2+) is bound by residues H399 and E422. N449 and N513 each carry an N-linked (GlcNAc...) asparagine glycan. The active-site Proton donor 1 is H524. R533 provides a ligand contact to chloride. A disulfide bridge connects residues C549 and C561. N-linked (GlcNAc...) asparagine glycans are attached at residues N681, N699, and N718. C761 and C767 are joined by a disulfide. Positions 795 and 833 each coordinate chloride. A glycan (N-linked (GlcNAc...) asparagine) is linked at N946. C961 and C979 are joined by a disulfide. Residue H992 coordinates Zn(2+). The Proton acceptor 2 role is filled by E993. Zn(2+) contacts are provided by H996 and E1020. W1094 and R1098 together coordinate chloride. Residue H1122 is the Proton donor 2 of the active site. Residue R1131 participates in chloride binding. C1147 and C1159 form a disulfide bridge. N1195 is a glycosylation site (N-linked (GlcNAc...) asparagine). The interval 1219–1260 (HGEKLGWPQYTWTPNSARSEGSLPDSGRVNFLGMNLDAQQAR) is juxtamembrane stalk. A helical transmembrane segment spans residues 1261–1281 (VGQWVLLFLGVALLLASLGLT). The Cytoplasmic portion of the chain corresponds to 1282–1310 (QRLFSIRYQSLRQPHHGPQFGSEVELRHS). S1303 bears the Phosphoserine mark.

The protein belongs to the peptidase M2 family. Monomer and homodimer; homodimerizes following binding to an inhibitor. Interacts with calmodulin (CALM1, CALM2 or CALM3); interaction takes place in the cytoplasmic region and regulates phosphorylation and proteolytic cleavage. Zn(2+) is required as a cofactor. It depends on chloride as a cofactor. In terms of processing, N-glycosylated. Post-translationally, phosphorylated by CK2 on Ser-1303; which allows membrane retention. Phosphorylated on tyrosine residues on its extracellular part, promoting cleavage by secretase enzymes and formation of the soluble form (Angiotensin-converting enzyme, soluble form). Produced following proteolytic cleavage by secretase enzymes that cleave the transmembrane form in the juxtamembrane stalk region upstream of the transmembrane region. Cleavage can take place at different sites of the juxtamembrane stalk region. Testis-specific isoform is expressed in spermatocytes, adult testis.

It is found in the cell membrane. The protein resides in the cytoplasm. It localises to the secreted. It carries out the reaction Release of a C-terminal dipeptide, oligopeptide-|-Xaa-Yaa, when Xaa is not Pro, and Yaa is neither Asp nor Glu. Thus, conversion of angiotensin I to angiotensin II, with increase in vasoconstrictor activity, but no action on angiotensin II.. It catalyses the reaction angiotensin I + H2O = L-histidyl-L-leucine + angiotensin II. The catalysed reaction is bradykinin + H2O = L-Phe-L-Arg + bradykinin(1-7). The enzyme catalyses substance P + H2O = substance P(1-9) + L-Leu-L-Met-NH2. It carries out the reaction substance P + H2O = substance P(1-8) + Gly-L-Leu-L-Met-NH2. It catalyses the reaction substance P + H2O = L-Phe-L-Phe-Gly-L-Leu-L-Met-NH2 + substance P(1-6). The catalysed reaction is neurotensin + H2O = neurotensin(1-11) + L-isoleucyl-L-leucine. The enzyme catalyses goralatide + H2O = N-acetyl-L-seryl-L-aspartate + L-lysyl-L-proline. It carries out the reaction Met-enkephalin + H2O = L-phenylalanyl-L-methionine + L-tyrosylglycylglycine. It catalyses the reaction Leu-enkephalin + H2O = L-tyrosylglycylglycine + L-phenylalanyl-L-leucine. The catalysed reaction is Met-enkephalin-Arg-Phe + H2O = L-arginyl-L-phenylalanine + Met-enkephalin. Its activity is regulated as follows. The dipeptidyl carboxypeptidase activity is strongly activated by chloride. Specifically inhibited by lisinopril. Inhibited by mixanpril, an orally-active drug used for the treatment of hypertension. With respect to regulation, strongly inhibited by lisinopril and captopril. Dipeptidyl carboxypeptidase that removes dipeptides from the C-terminus of a variety of circulating hormones, such as angiotensin I, bradykinin or enkephalins, thereby playing a key role in the regulation of blood pressure, electrolyte homeostasis or synaptic plasticity. Composed of two similar catalytic domains, each possessing a functional active site, with different selectivity for substrates. Plays a major role in the angiotensin-renin system that regulates blood pressure and sodium retention by the kidney by converting angiotensin I to angiotensin II, resulting in an increase of the vasoconstrictor activity of angiotensin. Also able to inactivate bradykinin, a potent vasodilator, and therefore enhance the blood pressure response. Acts as a regulator of synaptic transmission by mediating cleavage of neuropeptide hormones, such as substance P, neurotensin or enkephalins. Catalyzes degradation of different enkephalin neuropeptides (Met-enkephalin, Leu-enkephalin, Met-enkephalin-Arg-Phe and possibly Met-enkephalin-Arg-Gly-Leu). Acts as a regulator of synaptic plasticity in the nucleus accumbens of the brain by mediating cleavage of Met-enkephalin-Arg-Phe, a strong ligand of Mu-type opioid receptor OPRM1, into Met-enkephalin. Met-enkephalin-Arg-Phe cleavage by ACE decreases activation of OPRM1, leading to long-term synaptic potentiation of glutamate release. Also acts as a regulator of hematopoietic stem cell differentiation by mediating degradation of hemoregulatory peptide N-acetyl-SDKP (AcSDKP). Acts as a regulator of cannabinoid signaling pathway by mediating degradation of hemopressin, an antagonist peptide of the cannabinoid receptor CNR1. Involved in amyloid-beta metabolism by catalyzing degradation of Amyloid-beta protein 40 and Amyloid-beta protein 42 peptides, thereby preventing plaque formation. Catalyzes cleavage of cholecystokinin (maturation of Cholecystokinin-8 and Cholecystokinin-5) and Gonadoliberin-1 (both maturation and degradation) hormones. Degradation of hemoregulatory peptide N-acetyl-SDKP (AcSDKP) and amyloid-beta proteins is mediated by the N-terminal catalytic domain, while angiotensin I and cholecystokinin cleavage is mediated by the C-terminal catalytic region. Functionally, soluble form that is released in blood plasma and other body fluids following proteolytic cleavage in the juxtamembrane stalk region. In terms of biological role, isoform produced by alternative promoter usage that is specifically expressed in spermatocytes and adult testis, and which is required for male fertility. In contrast to somatic isoforms, only contains one catalytic domain. Acts as a dipeptidyl carboxypeptidase that removes dipeptides from the C-terminus of substrates. The identity of substrates that are needed for male fertility is unknown. May also have a glycosidase activity which releases GPI-anchored proteins from the membrane by cleaving the mannose linkage in the GPI moiety. The GPIase activity was reported to be essential for the egg-binding ability of the sperm. This activity is however unclear and has been challenged by other groups, suggesting that it may be indirect. The polypeptide is Angiotensin-converting enzyme (Oryctolagus cuniculus (Rabbit)).